Here is a 293-residue protein sequence, read N- to C-terminus: 4-hydroxy-tetrahydrodipicolinate synthase (293 aa).

T44 contributes to the pyruvate binding site. The Proton donor/acceptor role is filled by Y132. The active-site Schiff-base intermediate with substrate is K161. I203 is a binding site for pyruvate.

This sequence belongs to the DapA family. Homotetramer; dimer of dimers.

It is found in the cytoplasm. It carries out the reaction L-aspartate 4-semialdehyde + pyruvate = (2S,4S)-4-hydroxy-2,3,4,5-tetrahydrodipicolinate + H2O + H(+). Its pathway is amino-acid biosynthesis; L-lysine biosynthesis via DAP pathway; (S)-tetrahydrodipicolinate from L-aspartate: step 3/4. Functionally, catalyzes the condensation of (S)-aspartate-beta-semialdehyde [(S)-ASA] and pyruvate to 4-hydroxy-tetrahydrodipicolinate (HTPA). This is 4-hydroxy-tetrahydrodipicolinate synthase from Persephonella marina (strain DSM 14350 / EX-H1).